The sequence spans 279 residues: Putative polysaccharide deacetylase YxkH (279 aa).

An N-terminal signal peptide occupies residues 1-19 (MKRLFLSIFLLGSCLALAA). The N-palmitoyl cysteine moiety is linked to residue cysteine 20. Residue cysteine 20 is the site of S-diacylglycerol cysteine attachment. Residues 29–51 (QPMPKAEQKKPEKKAVQVQKKED) form a disordered region. Basic and acidic residues predominate over residues 34–51 (AEQKKPEKKAVQVQKKED). One can recognise a NodB homology domain in the interval 119-279 (KCVLITFDDG…AFGAYIESMK (161 aa)).

This sequence belongs to the polysaccharide deacetylase family.

Its subcellular location is the cell membrane. This is Putative polysaccharide deacetylase YxkH (yxkH) from Bacillus subtilis (strain 168).